The following is an 853-amino-acid chain: Protein translocase subunit SecA 1 (853 aa).

Residues Q85, G103–T107, and D492 contribute to the ATP site.

It belongs to the SecA family. As to quaternary structure, monomer and homodimer. Part of the essential Sec protein translocation apparatus which comprises SecA, SecYEG and auxiliary proteins SecDF. Other proteins may also be involved.

The protein localises to the cell membrane. It is found in the cytoplasm. It catalyses the reaction ATP + H2O + cellular proteinSide 1 = ADP + phosphate + cellular proteinSide 2.. Its function is as follows. Part of the Sec protein translocase complex. Interacts with the SecYEG preprotein conducting channel. Has a central role in coupling the hydrolysis of ATP to the transfer of proteins into and across the cell membrane, serving as an ATP-driven molecular motor driving the stepwise translocation of polypeptide chains across the membrane. This chain is Protein translocase subunit SecA 1, found in Corynebacterium diphtheriae (strain ATCC 700971 / NCTC 13129 / Biotype gravis).